We begin with the raw amino-acid sequence, 351 residues long: Photosystem II D2 protein (351 aa).

A helical membrane pass occupies residues 39 to 59 (CAFLALGGWLTGTTFVTSWYT). H116 is a binding site for chlorophyll a. The helical transmembrane segment at 123 to 139 (GFMLRQFEIARLVGIRP) threads the bilayer. Residues Q128 and N141 each contribute to the pheophytin a site. Residues 151–164 (VFVSVFLMYPLGQS) form a helical membrane-spanning segment. H196 is a binding site for chlorophyll a. A helical transmembrane segment spans residues 206 to 226 (GALLCAIHGATVENTLFEDGD). Positions 213 and 260 each coordinate a plastoquinone. H213 provides a ligand contact to Fe cation. Fe cation is bound at residue H267. A helical transmembrane segment spans residues 277-293 (GLWMSAVGIVGLALNLR).

This sequence belongs to the reaction center PufL/M/PsbA/D family. In terms of assembly, PSII is composed of 1 copy each of membrane proteins PsbA, PsbB, PsbC, PsbD, PsbE, PsbF, PsbH, PsbI, PsbJ, PsbK, PsbL, PsbM, PsbT, PsbX, PsbY, PsbZ, Psb30/Ycf12, peripheral proteins PsbO, CyanoQ (PsbQ), PsbU, PsbV and a large number of cofactors. It forms dimeric complexes. The D1/D2 heterodimer binds P680, chlorophylls that are the primary electron donor of PSII, and subsequent electron acceptors. It shares a non-heme iron and each subunit binds pheophytin, quinone, additional chlorophylls, carotenoids and lipids. There is also a Cl(-1) ion associated with D1 and D2, which is required for oxygen evolution. The PSII complex binds additional chlorophylls, carotenoids and specific lipids. is required as a cofactor.

Its subcellular location is the cellular thylakoid membrane. It carries out the reaction 2 a plastoquinone + 4 hnu + 2 H2O = 2 a plastoquinol + O2. Photosystem II (PSII) is a light-driven water:plastoquinone oxidoreductase that uses light energy to abstract electrons from H(2)O, generating O(2) and a proton gradient subsequently used for ATP formation. It consists of a core antenna complex that captures photons, and an electron transfer chain that converts photonic excitation into a charge separation. The D1/D2 (PsbA/PsbD) reaction center heterodimer binds P680, the primary electron donor of PSII as well as several subsequent electron acceptors. D2 is needed for assembly of a stable PSII complex. This chain is Photosystem II D2 protein, found in Nostoc punctiforme (strain ATCC 29133 / PCC 73102).